Reading from the N-terminus, the 377-residue chain is 3-dehydroquinate synthase (377 aa).

NAD(+) contacts are provided by residues 115-119, 139-140, lysine 152, and lysine 161; these read GVIGD and TS. The Zn(2+) site is built by glutamate 194, histidine 256, and histidine 275.

It belongs to the sugar phosphate cyclases superfamily. Dehydroquinate synthase family. Co(2+) is required as a cofactor. Zn(2+) serves as cofactor. The cofactor is NAD(+).

Its subcellular location is the cytoplasm. The enzyme catalyses 7-phospho-2-dehydro-3-deoxy-D-arabino-heptonate = 3-dehydroquinate + phosphate. Its pathway is metabolic intermediate biosynthesis; chorismate biosynthesis; chorismate from D-erythrose 4-phosphate and phosphoenolpyruvate: step 2/7. Its function is as follows. Catalyzes the conversion of 3-deoxy-D-arabino-heptulosonate 7-phosphate (DAHP) to dehydroquinate (DHQ). This chain is 3-dehydroquinate synthase, found in Rhizobium rhizogenes (strain K84 / ATCC BAA-868) (Agrobacterium radiobacter).